Consider the following 130-residue polypeptide: MNDPLGDMLTRIRNAQLRGKSTVSTPASRLRAWVLDVLQAEGYIRGYEKKETENGQGELVISLKYFEGTPVIRELKRVSKPGRRVYMATKDLPSVRNGLGVSIISTPKGVMSDASARSANVGGEVLCTVF.

Belongs to the universal ribosomal protein uS8 family. As to quaternary structure, part of the 30S ribosomal subunit. Contacts proteins S5 and S12.

Its function is as follows. One of the primary rRNA binding proteins, it binds directly to 16S rRNA central domain where it helps coordinate assembly of the platform of the 30S subunit. The polypeptide is Small ribosomal subunit protein uS8 (Cereibacter sphaeroides (strain KD131 / KCTC 12085) (Rhodobacter sphaeroides)).